Here is a 153-residue protein sequence, read N- to C-terminus: Lipoprotein signal peptidase (153 aa).

Helical transmembrane passes span 7–27 (LIIISIFLIDFFTKKWILNNY), 59–79 (NLIRILIIVISIFILLFIFYM), and 93–113 (SIIIGGSFGNIFDRIFYGSVI). Residues Asp-114 and Asp-132 contribute to the active site. A helical membrane pass occupies residues 123–143 (WHFPVFNFADISIFIGFLILI).

It belongs to the peptidase A8 family.

It localises to the cell membrane. The catalysed reaction is Release of signal peptides from bacterial membrane prolipoproteins. Hydrolyzes -Xaa-Yaa-Zaa-|-(S,diacylglyceryl)Cys-, in which Xaa is hydrophobic (preferably Leu), and Yaa (Ala or Ser) and Zaa (Gly or Ala) have small, neutral side chains.. Its pathway is protein modification; lipoprotein biosynthesis (signal peptide cleavage). Functionally, this protein specifically catalyzes the removal of signal peptides from prolipoproteins. The protein is Lipoprotein signal peptidase of Wigglesworthia glossinidia brevipalpis.